The chain runs to 359 residues: 3-dehydroquinate synthase (359 aa).

NAD(+)-binding positions include 69–74 (DAETGK), 103–107 (GAATD), 127–128 (TT), Lys140, and Lys149. Glu182, His244, and His260 together coordinate Zn(2+).

Belongs to the sugar phosphate cyclases superfamily. Dehydroquinate synthase family. The cofactor is Co(2+). It depends on Zn(2+) as a cofactor. Requires NAD(+) as cofactor.

The protein resides in the cytoplasm. The catalysed reaction is 7-phospho-2-dehydro-3-deoxy-D-arabino-heptonate = 3-dehydroquinate + phosphate. It participates in metabolic intermediate biosynthesis; chorismate biosynthesis; chorismate from D-erythrose 4-phosphate and phosphoenolpyruvate: step 2/7. In terms of biological role, catalyzes the conversion of 3-deoxy-D-arabino-heptulosonate 7-phosphate (DAHP) to dehydroquinate (DHQ). The sequence is that of 3-dehydroquinate synthase from Corynebacterium diphtheriae (strain ATCC 700971 / NCTC 13129 / Biotype gravis).